A 348-amino-acid chain; its full sequence is MTTLQGKSITVHDMTLRDGMHPKRHLMTLDQMRTIAQGLDAAGVPLIEVTHGDGLGGSSLNYGFPAHSDEEYLGAVIPLMKQAKVSALLLPGIGTVDHLKMARELGVHTIRVATHCTEADVSEQHISYARKLDMDTVGFLMMAHMNSPEGLVKQAKLMESYGANCIYITDSAGYMLPDDVKVRLSAVREALKPETELGFHGHHNLAMGIANSIAAIECGATRIDAAAAGLGAGAGNTPMEVLVAVCDRMGIRTGVDVWKIQDVAEDLVVPIMDFPIRIDRDALTLGYAGVYGSFLLFAKRAEKKYGVPARDLLVELGRRGMVGGQEDMIEDTALTMARQRGLLPEQAA.

Residues 9-261 form the Pyruvate carboxyltransferase domain; that stretch reads ITVHDMTLRD…RTGVDVWKIQ (253 aa). 17–18 is a substrate binding site; that stretch reads RD. Aspartate 18 contributes to the Mn(2+) binding site. Histidine 21 acts as the Proton acceptor in catalysis. Substrate is bound by residues serine 171 and histidine 200. 2 residues coordinate Mn(2+): histidine 200 and histidine 202. Residue tyrosine 291 coordinates substrate.

It belongs to the 4-hydroxy-2-oxovalerate aldolase family.

The catalysed reaction is (S)-4-hydroxy-2-oxopentanoate = acetaldehyde + pyruvate. The chain is 4-hydroxy-2-oxovalerate aldolase from Ralstonia pickettii (strain 12J).